The following is a 512-amino-acid chain: Apolipoprotein N-acyltransferase (512 aa).

The next 6 membrane-spanning stretches (helical) occupy residues 5-25 (LDKY…FAAA), 56-76 (FAVS…FYWI), 92-112 (VPLT…CFWL), 118-138 (LPRG…TEFA), 168-188 (FGGI…LVLA), and 195-215 (SGKR…GYTA). Residues 233-477 (LQGNIDQTLK…ETVLEGHIKG (245 aa)) form the CN hydrolase domain. Catalysis depends on Glu-271, which acts as the Proton acceptor. The active site involves Lys-337. The Nucleophile role is filled by Cys-389. A helical membrane pass occupies residues 487-507 (TGSSWWLMGILTLAALILFIF).

Belongs to the CN hydrolase family. Apolipoprotein N-acyltransferase subfamily.

The protein resides in the cell inner membrane. It catalyses the reaction N-terminal S-1,2-diacyl-sn-glyceryl-L-cysteinyl-[lipoprotein] + a glycerophospholipid = N-acyl-S-1,2-diacyl-sn-glyceryl-L-cysteinyl-[lipoprotein] + a 2-acyl-sn-glycero-3-phospholipid + H(+). Its pathway is protein modification; lipoprotein biosynthesis (N-acyl transfer). In terms of biological role, catalyzes the phospholipid dependent N-acylation of the N-terminal cysteine of apolipoprotein, the last step in lipoprotein maturation. In Neisseria meningitidis serogroup A / serotype 4A (strain DSM 15465 / Z2491), this protein is Apolipoprotein N-acyltransferase.